A 34-amino-acid polypeptide reads, in one-letter code: GDACSLLNGDDCGPGELCCTPSGDHQGTCETSCW.

3 cysteine pairs are disulfide-bonded: cysteine 4-cysteine 19, cysteine 12-cysteine 29, and cysteine 18-cysteine 33. 4-hydroxyproline is present on residues proline 14 and proline 21.

Expressed by the venom duct.

Its subcellular location is the secreted. This is Conotoxin Cl6d from Californiconus californicus (California cone).